The primary structure comprises 417 residues: Gamma-glutamyl phosphate reductase (417 aa).

This sequence belongs to the gamma-glutamyl phosphate reductase family.

The protein resides in the cytoplasm. The catalysed reaction is L-glutamate 5-semialdehyde + phosphate + NADP(+) = L-glutamyl 5-phosphate + NADPH + H(+). It participates in amino-acid biosynthesis; L-proline biosynthesis; L-glutamate 5-semialdehyde from L-glutamate: step 2/2. Its function is as follows. Catalyzes the NADPH-dependent reduction of L-glutamate 5-phosphate into L-glutamate 5-semialdehyde and phosphate. The product spontaneously undergoes cyclization to form 1-pyrroline-5-carboxylate. This Haemophilus influenzae (strain PittEE) protein is Gamma-glutamyl phosphate reductase.